The primary structure comprises 452 residues: Keratin, type II cytoskeletal 80 (452 aa).

The interval 1–82 (MAYRSCVVGF…DPAVQQQKNQ (82 aa)) is head. S45 carries the post-translational modification Phosphoserine. Residues 82 to 118 (QEKEEMKALNDKFASLIGKVQALEQRNQLLETRWSFL) form a coil 1A region. Residues 83–394 (EKEEMKALND…KLMEGEESRM (312 aa)) enclose the IF rod domain. The segment at 119 to 135 (QGQGSATFDLSHHYETF) is linker 1. The segment at 136 to 227 (QGRLQEELRK…TVYEQELKDL (92 aa)) is coil 1B. The interval 228-251 (TAQVKDVSVTVGLDSRCHIDLSGI) is linker 12. The coil 2 stretch occupies residues 252–390 (VEEVKAQYDA…ATYHKLMEGE (139 aa)). The interval 391–452 (ESRMDLPSAT…YLSQESEASE (62 aa)) is tail. Positions 412–452 (TASKSGLTKTSSRKKKNRRGPVIKITEMSEKYLSQESEASE) are disordered. The span at 422–432 (SSRKKKNRRGP) shows a compositional bias: basic residues. The segment covering 443 to 452 (YLSQESEASE) has biased composition (polar residues).

Belongs to the intermediate filament family. As to quaternary structure, heterotetramer of two type I and two type II keratins.

This is Keratin, type II cytoskeletal 80 (Krt80) from Mus musculus (Mouse).